The following is a 189-amino-acid chain: Photosystem I assembly protein Ycf4 (189 aa).

2 helical membrane-spanning segments follow: residues 25-45 and 62-82; these read SVYFWAVALTGGGLGFTLAGL and LVFIPQGIAMLFYGVLGSLAG.

Belongs to the Ycf4 family.

The protein localises to the cellular thylakoid membrane. In terms of biological role, seems to be required for the assembly of the photosystem I complex. The chain is Photosystem I assembly protein Ycf4 from Synechococcus sp. (strain JA-2-3B'a(2-13)) (Cyanobacteria bacterium Yellowstone B-Prime).